Consider the following 113-residue polypeptide: Hydrogenase maturation factor HypA (113 aa).

Position 2 (histidine 2) interacts with Ni(2+). Cysteine 73, cysteine 76, cysteine 89, and cysteine 92 together coordinate Zn(2+).

This sequence belongs to the HypA/HybF family.

In terms of biological role, involved in the maturation of [NiFe] hydrogenases. Required for nickel insertion into the metal center of the hydrogenase. The polypeptide is Hydrogenase maturation factor HypA (Rhodopseudomonas palustris (strain BisB5)).